The sequence spans 177 residues: Thymidine kinase (177 aa).

11 to 18 is an ATP binding site; sequence GPMFSGKS. The active-site Proton acceptor is Glu-83. Phe-113 provides a ligand contact to substrate. 2 residues coordinate Zn(2+): Cys-138 and Cys-141. 157-161 is a substrate binding site; it reads IEIIG. Zn(2+) contacts are provided by Cys-170 and Cys-173.

Belongs to the thymidine kinase family. In terms of assembly, homotetramer. Two molecules of substrate bind to each enzyme tetramer.

The enzyme catalyses thymidine + ATP = dTMP + ADP + H(+). Functionally, phosphorylates thymidine and thymidine analogs, such as azidothymidine (AZT). Part of the salvage pathway for pyrimidine deoxyribonucleotide synthesis. This chain is Thymidine kinase (OPG101), found in Homo sapiens (Human).